Consider the following 56-residue polypeptide: Prokaryotic ubiquitin-like protein UBact (56 aa).

A disordered region spans residues 1–56; that stretch reads MPERIVKPMPQDPVTKPGDEGPRTPNVPKPDTERLLERMRRVDPRQAQRYRQRSGE. A compositionally biased stretch (basic and acidic residues) spans 30–46; that stretch reads PDTERLLERMRRVDPRQ. Residue Glu-56 forms an Isoglutamyl lysine isopeptide (Glu-Lys) (interchain with K-? in acceptor proteins) linkage.

This sequence belongs to the ubiquitin-like protein UBact family.

In terms of biological role, may function as a protein modifier covalently attached to lysine residues of substrate proteins. This may serve to target the modified proteins for degradation by proteasomes. This chain is Prokaryotic ubiquitin-like protein UBact, found in Acetithermum autotrophicum.